Consider the following 162-residue polypeptide: Glycogen accumulation regulator GarA (162 aa).

Residue threonine 21 is modified to Phosphothreonine; by PknG. The residue at position 22 (threonine 22) is a Phosphothreonine; by PknB. Residues 77–126 (TSAGRHPDSDIFLDDVTVSRRHAEFRLENNEFNVVDVGSLNGTYVNREPV) form the FHA domain.

In terms of assembly, monomer. Phosphorylated on Thr-22 by PknB. Phosphorylated on Thr-21 by PknG. Phosphorylation at either Thr-21 or Thr-22 prevents binding to target enzymes.

In terms of biological role, involved in regulation of glutamate metabolism. The polypeptide is Glycogen accumulation regulator GarA (garA) (Mycobacterium tuberculosis (strain CDC 1551 / Oshkosh)).